A 284-amino-acid chain; its full sequence is uncharacterized protein (284 aa).

The span at 1–27 (MSNLPTSTPVSPSNLAEENPKSNNPES) shows a compositional bias: polar residues. Disordered regions lie at residues 1-29 (MSNLPTSTPVSPSNLAEENPKSNNPESSE) and 248-284 (TRDSKRQQKKGKTTTVARSTNKKNKSMMGTVKDLKKK).

This is an uncharacterized protein from Caenorhabditis elegans.